Consider the following 228-residue polypeptide: Ribosomal RNA small subunit methyltransferase G (228 aa).

S-adenosyl-L-methionine contacts are provided by residues G89, L94, 140-141 (VE), and R159.

The protein belongs to the methyltransferase superfamily. RNA methyltransferase RsmG family.

The protein resides in the cytoplasm. The catalysed reaction is guanosine(527) in 16S rRNA + S-adenosyl-L-methionine = N(7)-methylguanosine(527) in 16S rRNA + S-adenosyl-L-homocysteine. Specifically methylates the N7 position of guanine in position 527 of 16S rRNA. The chain is Ribosomal RNA small subunit methyltransferase G from Burkholderia cenocepacia (strain HI2424).